A 179-amino-acid chain; its full sequence is dCTP deaminase (179 aa).

Residues 101-106 (RSTLAR) and Asp117 contribute to the dCTP site. Glu127 acts as the Proton donor/acceptor in catalysis. Residue Gln165 participates in dCTP binding.

Belongs to the dCTP deaminase family. In terms of assembly, homotrimer.

The catalysed reaction is dCTP + H2O + H(+) = dUTP + NH4(+). It functions in the pathway pyrimidine metabolism; dUMP biosynthesis; dUMP from dCTP (dUTP route): step 1/2. Catalyzes the deamination of dCTP to dUTP. This chain is dCTP deaminase, found in Caldivirga maquilingensis (strain ATCC 700844 / DSM 13496 / JCM 10307 / IC-167).